The sequence spans 66 residues: Large ribosomal subunit protein uL29 (66 aa).

This sequence belongs to the universal ribosomal protein uL29 family.

In Rhizobium meliloti (strain 1021) (Ensifer meliloti), this protein is Large ribosomal subunit protein uL29.